A 314-amino-acid chain; its full sequence is Palmitoyl-protein thioesterase 1 (314 aa).

The first 25 residues, 1-25, serve as a signal peptide directing secretion; that stretch reads MISICCSRFSCILFLLFLIFSLVLS. Intrachain disulfides connect Cys-53/Cys-54, Cys-104/Cys-136, and Cys-160/Cys-168. Residue Ser-123 is the Nucleophile of the active site. Asn-240 carries an N-linked (GlcNAc...) asparagine glycan. Active-site residues include Asp-241 and His-295.

Belongs to the palmitoyl-protein thioesterase family. As to expression, ubiquitously expressed.

It is found in the lysosome. The catalysed reaction is S-hexadecanoyl-L-cysteinyl-[protein] + H2O = L-cysteinyl-[protein] + hexadecanoate + H(+). Its function is as follows. Cleaves thioester-linked long fatty acyl groups such as palmitate from modified cysteine residues in proteins or peptides. This chain is Palmitoyl-protein thioesterase 1 (Ppt1), found in Drosophila melanogaster (Fruit fly).